The chain runs to 610 residues: Phosphoenolpyruvate carboxykinase [GTP] (610 aa).

Residues arginine 82 and 221-223 (YGG) each bind substrate. Positions 230 and 250 each coordinate Mn(2+). A substrate-binding site is contributed by serine 272. Residue 273 to 278 (ACGKTN) participates in GTP binding. Cysteine 274 is a catalytic residue. Aspartate 297 contacts Mn(2+). 387 to 389 (NSR) contacts substrate. Residues arginine 389, arginine 420, and 515–518 (FGDN) each bind GTP.

It belongs to the phosphoenolpyruvate carboxykinase [GTP] family. In terms of assembly, monomer. Requires Mn(2+) as cofactor.

It is found in the cytoplasm. It catalyses the reaction oxaloacetate + GTP = phosphoenolpyruvate + GDP + CO2. The protein operates within carbohydrate biosynthesis; gluconeogenesis. Catalyzes the conversion of oxaloacetate (OAA) to phosphoenolpyruvate (PEP), the rate-limiting step in the metabolic pathway that produces glucose from lactate and other precursors derived from the citric acid cycle. This chain is Phosphoenolpyruvate carboxykinase [GTP], found in Corynebacterium glutamicum (strain R).